The following is a 201-amino-acid chain: Protocatechuate 3,4-dioxygenase alpha chain (201 aa).

Arg-134 contributes to the 3,4-dihydroxybenzoate binding site.

Belongs to the intradiol ring-cleavage dioxygenase family. As to quaternary structure, the enzyme is an oligomer of 12 copies of the alpha and beta chains. Fe(3+) is required as a cofactor.

It catalyses the reaction 3,4-dihydroxybenzoate + O2 = 3-carboxy-cis,cis-muconate + 2 H(+). Its pathway is aromatic compound metabolism; beta-ketoadipate pathway; 3-carboxy-cis,cis-muconate from 3,4-dihydroxybenzoate: step 1/1. Plays an essential role in the utilization of numerous aromatic and hydroaromatic compounds via the beta-ketoadipate pathway. The sequence is that of Protocatechuate 3,4-dioxygenase alpha chain (pcaG) from Pseudomonas putida (Arthrobacter siderocapsulatus).